A 246-amino-acid chain; its full sequence is Carboxy-S-adenosyl-L-methionine synthase (246 aa).

S-adenosyl-L-methionine is bound by residues Y39, 64–66, 89–90, 117–118, N132, and R199; these read GCS, DN, and DI.

The protein belongs to the class I-like SAM-binding methyltransferase superfamily. Cx-SAM synthase family. As to quaternary structure, homodimer.

The catalysed reaction is prephenate + S-adenosyl-L-methionine = carboxy-S-adenosyl-L-methionine + 3-phenylpyruvate + H2O. Functionally, catalyzes the conversion of S-adenosyl-L-methionine (SAM) to carboxy-S-adenosyl-L-methionine (Cx-SAM). This chain is Carboxy-S-adenosyl-L-methionine synthase, found in Enterobacter sp. (strain 638).